We begin with the raw amino-acid sequence, 569 residues long: AP-4 complex accessory subunit Tepsin (569 aa).

Residues 8-141 (RDRLSFLHRL…FSDALPQPPS (134 aa)) form the ENTH domain. Residues 196 to 298 (VRPGPDNPCT…SGASREPGDL (103 aa)) are disordered. A compositionally biased stretch (polar residues) spans 219–229 (VTPSASHTHPN). Residues 260 to 292 (SSPSSQNSSCTSNLSRASDSVSRSGSDSHSGAS) are compositionally biased toward low complexity. Ser400 carries the post-translational modification Phosphoserine. Residues 467–524 (VPRSPVPTPSPDTLPPALQDPGELRTQLVCSSEPGTGSEQRLENTDTPKDSSSPCPWS) form a disordered region. Residues 470 to 480 (SPVPTPSPDTL) show a composition bias toward pro residues. Residues 494 to 505 (LVCSSEPGTGSE) show a composition bias toward polar residues. Residues 506-515 (QRLENTDTPK) show a composition bias toward basic and acidic residues. Positions 525–535 (PNSLFAGMELV) are interaction with AP4B1. Residues 559–569 (SEPSAFAFLNM) are interaction with AP4E1.

In terms of assembly, interacts with AP4B1 and AP4E1; the interaction is direct and mediates the association of TEPSIN with the adapter-like complex 4 (AP-4), a heterotetramer composed of AP4B1, AP4E1, AP4M1 and AP4S1.

Its subcellular location is the golgi apparatus. The protein resides in the trans-Golgi network membrane. The protein localises to the cytoplasmic vesicle. It localises to the cytoplasm. It is found in the cytosol. Associates with the adapter-like complex 4 (AP-4) and may therefore play a role in vesicular trafficking of proteins at the trans-Golgi network. The sequence is that of AP-4 complex accessory subunit Tepsin from Rattus norvegicus (Rat).